Here is a 354-residue protein sequence, read N- to C-terminus: Chorismate synthase (354 aa).

Arg48 and Arg54 together coordinate NADP(+). Residues 125–127 (RSS), 238–239 (NA), Gly278, 293–297 (KPTSS), and Arg319 contribute to the FMN site.

This sequence belongs to the chorismate synthase family. As to quaternary structure, homotetramer. Requires FMNH2 as cofactor.

It catalyses the reaction 5-O-(1-carboxyvinyl)-3-phosphoshikimate = chorismate + phosphate. It functions in the pathway metabolic intermediate biosynthesis; chorismate biosynthesis; chorismate from D-erythrose 4-phosphate and phosphoenolpyruvate: step 7/7. Functionally, catalyzes the anti-1,4-elimination of the C-3 phosphate and the C-6 proR hydrogen from 5-enolpyruvylshikimate-3-phosphate (EPSP) to yield chorismate, which is the branch point compound that serves as the starting substrate for the three terminal pathways of aromatic amino acid biosynthesis. This reaction introduces a second double bond into the aromatic ring system. This chain is Chorismate synthase, found in Buchnera aphidicola subsp. Acyrthosiphon pisum (strain 5A).